The chain runs to 69 residues: Ribosome modulation factor (69 aa).

The protein belongs to the ribosome modulation factor family.

It is found in the cytoplasm. Its function is as follows. During stationary phase, converts 70S ribosomes to an inactive dimeric form (100S ribosomes). The protein is Ribosome modulation factor of Marinomonas mediterranea (strain ATCC 700492 / JCM 21426 / NBRC 103028 / MMB-1).